A 506-amino-acid polypeptide reads, in one-letter code: MSTANNNSEHPESVSLNAFKQPKAFYLIFSIELWERFGYYGLQGIMAVYLVKMLGLSEADSITLFSSFSALVYGFVAIGGWLGDKVLGSKRVIVLGALVLAVGYAMVAYSGHEIFWVYLGMATIAVGSGLFKANPSSLLSTCYEKDDPRLDGAFTMYYMSVNIGSFLSMLATPWLAAKYGWSVAFSLSVVGMLITLVNFMVCHKWVKQHGSKPDFKPLQVKKLLMVLVGVVALVALSSWLLHNQIIARWALAIVSIGIVIVFAKETFALHGAARRKMIVAFLLMLEAVVFFVLYSQMPTSLNFFAIHNVEHNILGLAFEPEQYQALNPFWIMLASPILAALYNKMGDRLPMPHKFAFGMILCSGAFLVLPWGASFANEQGIVSVNWLILSYALQSIGELMISGLGLAMVAQLVPQRLMGFIMGSWFLTTAAAALIAGKVAGLTAVPGDVNDAHASLAIYSHVFMQIGIATAVIAILMMLTAPKLHRMTLDTAEDTEKKAQAAAITN.

Residues 1 to 36 (MSTANNNSEHPESVSLNAFKQPKAFYLIFSIELWER) lie on the Cytoplasmic side of the membrane. The helical transmembrane segment at 37–57 (FGYYGLQGIMAVYLVKMLGLS) threads the bilayer. At 58–61 (EADS) the chain is on the periplasmic side. Residues 62 to 82 (ITLFSSFSALVYGFVAIGGWL) traverse the membrane as a helical segment. At 83 to 91 (GDKVLGSKR) the chain is on the cytoplasmic side. 2 helical membrane-spanning segments follow: residues 92 to 112 (VIVLGALVLAVGYAMVAYSGH) and 113 to 133 (EIFWVYLGMATIAVGSGLFKA). Over 134-155 (NPSSLLSTCYEKDDPRLDGAFT) the chain is Cytoplasmic. Residues 156 to 176 (MYYMSVNIGSFLSMLATPWLA) traverse the membrane as a helical segment. Residues 177-180 (AKYG) are Periplasmic-facing. The chain crosses the membrane as a helical span at residues 181 to 201 (WSVAFSLSVVGMLITLVNFMV). Residues 202–222 (CHKWVKQHGSKPDFKPLQVKK) lie on the Cytoplasmic side of the membrane. Residues 223–243 (LLMVLVGVVALVALSSWLLHN) traverse the membrane as a helical segment. At 244 to 248 (QIIAR) the chain is on the periplasmic side. A helical transmembrane segment spans residues 249-269 (WALAIVSIGIVIVFAKETFAL). The Cytoplasmic portion of the chain corresponds to 270–276 (HGAARRK). Residues 277 to 297 (MIVAFLLMLEAVVFFVLYSQM) traverse the membrane as a helical segment. The Periplasmic portion of the chain corresponds to 298 to 322 (PTSLNFFAIHNVEHNILGLAFEPEQ). Residues 323 to 343 (YQALNPFWIMLASPILAALYN) traverse the membrane as a helical segment. The Cytoplasmic segment spans residues 344 to 354 (KMGDRLPMPHK). A helical membrane pass occupies residues 355–375 (FAFGMILCSGAFLVLPWGASF). At 376 to 385 (ANEQGIVSVN) the chain is on the periplasmic side. The chain crosses the membrane as a helical span at residues 386 to 406 (WLILSYALQSIGELMISGLGL). The Cytoplasmic segment spans residues 407–416 (AMVAQLVPQR). A helical transmembrane segment spans residues 417 to 437 (LMGFIMGSWFLTTAAAALIAG). The Periplasmic portion of the chain corresponds to 438–461 (KVAGLTAVPGDVNDAHASLAIYSH). The helical transmembrane segment at 462 to 482 (VFMQIGIATAVIAILMMLTAP) threads the bilayer. Residues 483–506 (KLHRMTLDTAEDTEKKAQAAAITN) are Cytoplasmic-facing.

It belongs to the major facilitator superfamily. Proton-dependent oligopeptide transporter (POT/PTR) (TC 2.A.17) family. DtpA subfamily.

It is found in the cell inner membrane. In terms of biological role, proton-dependent permease that transports di- and tripeptides. The polypeptide is Dipeptide and tripeptide permease A (Serratia proteamaculans (strain 568)).